The chain runs to 300 residues: 1D-myo-inositol 2-acetamido-2-deoxy-alpha-D-glucopyranoside deacetylase (300 aa).

Residues His13, Asp16, and His147 each contribute to the Zn(2+) site.

This sequence belongs to the MshB deacetylase family. Zn(2+) is required as a cofactor.

The catalysed reaction is 1D-myo-inositol 2-acetamido-2-deoxy-alpha-D-glucopyranoside + H2O = 1D-myo-inositol 2-amino-2-deoxy-alpha-D-glucopyranoside + acetate. Catalyzes the deacetylation of 1D-myo-inositol 2-acetamido-2-deoxy-alpha-D-glucopyranoside (GlcNAc-Ins) in the mycothiol biosynthesis pathway. In Mycobacterium avium (strain 104), this protein is 1D-myo-inositol 2-acetamido-2-deoxy-alpha-D-glucopyranoside deacetylase.